The sequence spans 137 residues: MANVVQAKDNSQVFGVARIFASFNDTFVHVTDLSGRETIARVTGGMKVKADRDESSPYAAMLAAQDVAAKCKEVGITAVHIKIRATGGTRSKTPGPGGQAALRALARSGLRIGRIEDVTPVPSDSTRKKGGRRGRRL.

Residues 116 to 137 form a disordered region; sequence EDVTPVPSDSTRKKGGRRGRRL. Residues 128–137 are compositionally biased toward basic residues; sequence KKGGRRGRRL.

The protein belongs to the universal ribosomal protein uS11 family.

In Kluyveromyces lactis (strain ATCC 8585 / CBS 2359 / DSM 70799 / NBRC 1267 / NRRL Y-1140 / WM37) (Yeast), this protein is Small ribosomal subunit protein uS11 (RPS14).